The sequence spans 1366 residues: Serine/threonine-protein kinase RUNKEL (1366 aa).

ATP-binding positions include 10–18 (IGHGKCSTV) and K33. D121 serves as the catalytic Proton acceptor. Disordered regions lie at residues 276-356 (TKPC…VNIL), 367-386 (QKENEKENYRRPLPNSNENC), 398-502 (LDFD…DSSK), and 524-549 (PSRKSDKEAVHSLSFETPQPSDFSKK). The span at 283-302 (RNGDRPNKTPPKYREKDRKG) shows a compositional bias: basic and acidic residues. The span at 304–313 (SKQNENSIQG) shows a compositional bias: polar residues. The span at 367 to 376 (QKENEKENYR) shows a compositional bias: basic and acidic residues. The span at 398–414 (LDFDENNDDEGPDESEG) shows a compositional bias: acidic residues. Positions 422–433 (QEERVMSHNENH) are enriched in basic and acidic residues. Residues 438–454 (VVSSNVPDENSSANETP) are compositionally biased toward polar residues. 12 HEAT repeats span residues 595–633 (LTNGPIMLVLVKVLRLSKTPAFRVQIASLIGLLIRHSTS), 638–675 (LANSGILDSLTNGLRDKHEKVRRFSMAALGELLFYIST), 699–737 (QVSNALISLVSSVLRKGEDDLTQVYALRTIENICSQGAY), 835–872 (TEEKNLFPSLLSIIEQGTEVLRGKALLFVAFLCKNSRR), 878–907 (FCNARFLPVVDRLAKEKDSYLQQCLEAFVN), 908–945 (VIASIIPGMLDTITNDIQQLMTGRRHGPVSPLNSRAPV), 946–986 (KTNA…LVEA), 992–1018 (DDFRVTLLQVLECITGDAPLVTQNGEI), 1019–1057 (IIREILPSLAAIYNGNKDGDARFLCLKIWFDSLTILLTE), 1072–1111 (ISNSHFLPLYPALIQDEDPIPAYAQKLLVMLVEFDYIKIS), 1279–1316 (TNLPKITPILDSWRRRKSTELHLLVLKRVLHCLGYACK), and 1329–1366 (GHDVSKINAIVSEMKNSDAAGLNSIASLVAMELQRLPR).

The protein belongs to the protein kinase superfamily. Ser/Thr protein kinase family. As to quaternary structure, binds to microtubules (MT). Expressed in proliferating tissues of seedlings, lateral roots, young rosette leaves, siliques, flowers, embryos and stems (including apical meristem).

The protein localises to the cytoplasm. It localises to the cytoskeleton. It is found in the phragmoplast. Its subcellular location is the spindle. The enzyme catalyses L-seryl-[protein] + ATP = O-phospho-L-seryl-[protein] + ADP + H(+). The catalysed reaction is L-threonyl-[protein] + ATP = O-phospho-L-threonyl-[protein] + ADP + H(+). Essential protein that regulates phragmoplast microtubule organization during cell plate expansion in cytokinesis during cell division, both somatic and syncytial. Required for endosperm cellularisation. In pollen development, involved in cellularisation during microsporogenesis by regulating radial microtubules (MT) organization in microspore mother cells. Seems to not have kinase activity. The sequence is that of Serine/threonine-protein kinase RUNKEL from Arabidopsis thaliana (Mouse-ear cress).